A 331-amino-acid polypeptide reads, in one-letter code: DNA fragmentation factor subunit alpha (331 aa).

An N-acetylmethionine modification is found at Met1. One can recognise a CIDE-N domain in the interval 17–96; the sequence is TLKPCLLRRN…ALASNEKWAY (80 aa). The residue at position 243 (Thr243) is a Phosphothreonine. Residues 305-331 are disordered; that stretch reads SLRSISASKASPPGDLQNPKRARQDPT. Ser315 is subject to Phosphoserine.

As to quaternary structure, heterodimer of DFFA and DFFB. In terms of processing, caspase-3 cleaves DFF45 at 2 sites to generate an active factor.

Its subcellular location is the cytoplasm. Inhibitor of the caspase-activated DNase (DFF40). The sequence is that of DNA fragmentation factor subunit alpha (DFFA) from Homo sapiens (Human).